A 265-amino-acid polypeptide reads, in one-letter code: Phosphatidylserine decarboxylase proenzyme (265 aa).

The active-site Schiff-base intermediate with substrate; via pyruvic acid is the Ser-183. Position 183 is a pyruvic acid (Ser); by autocatalysis (Ser-183). Residues 216-246 (TAPQTESEPESEPALQTAPVETAANPSAEQR) are disordered.

This sequence belongs to the phosphatidylserine decarboxylase family. PSD-A subfamily. Heterodimer of a large membrane-associated beta subunit and a small pyruvoyl-containing alpha subunit. Pyruvate serves as cofactor. In terms of processing, is synthesized initially as an inactive proenzyme. Formation of the active enzyme involves a self-maturation process in which the active site pyruvoyl group is generated from an internal serine residue via an autocatalytic post-translational modification. Two non-identical subunits are generated from the proenzyme in this reaction, and the pyruvate is formed at the N-terminus of the alpha chain, which is derived from the carboxyl end of the proenzyme. The post-translation cleavage follows an unusual pathway, termed non-hydrolytic serinolysis, in which the side chain hydroxyl group of the serine supplies its oxygen atom to form the C-terminus of the beta chain, while the remainder of the serine residue undergoes an oxidative deamination to produce ammonia and the pyruvoyl prosthetic group on the alpha chain.

It localises to the cell membrane. The enzyme catalyses a 1,2-diacyl-sn-glycero-3-phospho-L-serine + H(+) = a 1,2-diacyl-sn-glycero-3-phosphoethanolamine + CO2. The protein operates within phospholipid metabolism; phosphatidylethanolamine biosynthesis; phosphatidylethanolamine from CDP-diacylglycerol: step 2/2. Its function is as follows. Catalyzes the formation of phosphatidylethanolamine (PtdEtn) from phosphatidylserine (PtdSer). The chain is Phosphatidylserine decarboxylase proenzyme from Neisseria meningitidis serogroup B (strain ATCC BAA-335 / MC58).